Here is a 293-residue protein sequence, read N- to C-terminus: EFIEQDAVVTISATQEDAPWGLARISSQEPGGTTYTYDDSAGTGTCAYIIDTGIYTNHTDFGGRAKFLKNFAGDGQDTDGNGHGTHVAGTVGGTTYGVAKKTSLFAVKVLDANGQGSNSGVIAGMDFVTKDASSQNCPKGVVVNMSLGGPSSSAVNRAAAEITSAGLFLAVAAGNEATDASSSSPASEESACTVGATDKTDTLAEYSNFGSVVDLLAPGTDIKSTWNDGRTKIISGTSMASPHVAGLGAYFLGLGQKVQGLCDYMVEKGLKDVIQSVPSDTANVLINNGEGSA.

A propeptide spanning residues 1 to 12 (EFIEQDAVVTIS) is cleaved from the precursor. One can recognise a Peptidase S8 domain in the interval 19–293 (PWGLARISSQ…VLINNGEGSA (275 aa)). 2 disulfides stabilise this stretch: Cys46–Cys137 and Cys192–Cys262. Active-site charge relay system residues include Asp51, His83, and Ser238.

The protein belongs to the peptidase S8 family.

Its function is as follows. Serine proteinase. In Parengyodontium album (Tritirachium album), this protein is Proteinase T (PROT).